A 301-amino-acid polypeptide reads, in one-letter code: Radial spoke head 1 homolog (301 aa).

The segment covering 1 to 20 has biased composition (acidic residues); it reads MSDLGSEELEEEGENDLGEY. A disordered region spans residues 1–41; it reads MSDLGSEELEEEGENDLGEYEGERNEVGERHGHGKARLPNG. MORN repeat units follow at residues 20 to 43, 44 to 66, 67 to 89, 90 to 112, 113 to 135, and 159 to 181; these read YEGERNEVGERHGHGKARLPNGDT, YEGSYEFGKRHGQGTYKFKNGAR, YTGDYVKNKKHGQGTFIYPDGSR, YEGEWADDQRHGQGVYYYVNNDT, YTGEWFNHQRHGQGTYLYAETGS, and YQGKFMNKNPVGPGKYVFDIGCE. Over residues 21-31 the composition is skewed to basic and acidic residues; it reads EGERNEVGERH. Residues 225–301 are disordered; it reads LSEEQPPPEG…FDEEPSDLQD (77 aa). Over residues 249–261 the composition is skewed to acidic residues; the sequence is PSEDIQAEGFEGE. Residues 262-278 are compositionally biased toward basic and acidic residues; sequence LEPRGADEDVDTFRQES. Positions 279–290 are enriched in polar residues; it reads QENSYDIDQGNL. Positions 292 to 301 are enriched in acidic residues; the sequence is FDEEPSDLQD.

As to quaternary structure, component of the axonemal radial spoke 1 (RS1) and 2 (RS2) complexes, at least composed of spoke head proteins RSPH1, RSPH3, RSPH9 and the cilia-specific component RSPH4A or sperm-specific component RSPH6A, spoke stalk proteins RSPH14, DNAJB13, DYDC1, ROPN1L and NME5, and the RS1 complex-specific anchor protein IQUB. Interacts with RSPH3B. Interacts with RSPH4A. Interacts with RSPH6A. In terms of tissue distribution, expressed in the trachea, ependymal cells, oviduct and ependymal cells (at protein level). Germ cell specific. Specifically expressed in testis, and to a lower extent in ovary. Not expressed in somatic tissues.

The protein resides in the cytoplasm. It is found in the chromosome. The protein localises to the cytoskeleton. It localises to the cilium axoneme. Its subcellular location is the flagellum axoneme. Functionally, functions as part of axonemal radial spoke complexes that play an important part in the motility of sperm and cilia. The protein is Radial spoke head 1 homolog (Rsph1) of Mus musculus (Mouse).